The chain runs to 251 residues: Hydroxyacylglutathione hydrolase (251 aa).

7 residues coordinate Zn(2+): His53, His55, Asp57, His58, His110, Asp127, and His165.

It belongs to the metallo-beta-lactamase superfamily. Glyoxalase II family. In terms of assembly, monomer. The cofactor is Zn(2+).

It catalyses the reaction an S-(2-hydroxyacyl)glutathione + H2O = a 2-hydroxy carboxylate + glutathione + H(+). It participates in secondary metabolite metabolism; methylglyoxal degradation; (R)-lactate from methylglyoxal: step 2/2. Functionally, thiolesterase that catalyzes the hydrolysis of S-D-lactoyl-glutathione to form glutathione and D-lactic acid. This is Hydroxyacylglutathione hydrolase from Escherichia coli O17:K52:H18 (strain UMN026 / ExPEC).